A 561-amino-acid chain; its full sequence is Liver carboxylesterase 1F (561 aa).

The signal sequence occupies residues 1 to 18 (MCLSFLFLVSLATCVVYG). An N-linked (GlcNAc...) asparagine glycan is attached at asparagine 79. Cysteine 87 and cysteine 116 form a disulfide bridge. Catalysis depends on serine 221, which acts as the Acyl-ester intermediate. Cysteines 273 and 284 form a disulfide. Active-site charge relay system residues include glutamate 353 and histidine 466. Positions 558–561 (HNEL) match the Prevents secretion from ER motif.

The protein belongs to the type-B carboxylesterase/lipase family. Expressed in liver and kidney.

The protein resides in the lipid droplet. It localises to the cytoplasm. It is found in the cytosol. Its subcellular location is the endoplasmic reticulum. The protein localises to the microsome. It carries out the reaction a carboxylic ester + H2O = an alcohol + a carboxylate + H(+). The enzyme catalyses all-trans-retinyl hexadecanoate + H2O = all-trans-retinol + hexadecanoate + H(+). Functionally, involved in the detoxification of xenobiotics and in the activation of ester and amide prodrugs. Hydrolyzes retinyl esters. Hydrolyzes p-nitrophenyl butyrate (PNPB), triacylglycerol and monoacylglycerol. Shows higher activity against PNPB, a short-chain fatty acid ester, than against triolein, a long-chain fatty acid ester. Shows no detectable activity against diacylglycerol, cholesterol ester or phospholipids. May play a role in adipocyte lipolysis. The protein is Liver carboxylesterase 1F of Rattus norvegicus (Rat).